The primary structure comprises 550 residues: MLKTINPTQTQAWNALTAHFESAQDMDLKDLFAQDAARFDKFSARFGSDILVDYSKNLINEETLKHLFALAKETELSAAIKAMFSGEAINQTEGRAVLHTALRNRSNQPVLVDGEDVMPAVNAVLEKMKSFTDRVIGGEWKGYTGKAITDIVNIGIGGSDLGPYMVTEALAPYKNHLNLHFVSNVDGTHIVETLKKVDPETTLFLIASKTFTTQETMTNAHTARDWFLATAGDQAHVAKHFAALSTNAPAVSEFGIDTDNMFEFWDWVGGRYSLWSAIGLSIALAVGYDNFVELLEGAHEMDNHFVSTELESNIPVILALIGIWYNNFHGAESEAILPYDQYMHRFAAYFQQGNMESNGKYVDRNGNPVTYQTGPIIWGEPGTNGQHAFYQLIHQGTKLIPCDFIAPAVSHNPAGDHHQKLMSNFFAQTEALAFGKNEATVKAELVKAGKNAEEVAAIAPFKVFEGNRPTNSILVKQITPRTLGNLIAMYEHKIFVQGVIWNIFSFDQWGVELGKQLANQILPELADDSEISSHDSSTNGLINAFKAFKA.

Glu-356 (proton donor) is an active-site residue. Active-site residues include His-387 and Lys-515.

This sequence belongs to the GPI family.

It localises to the cytoplasm. The enzyme catalyses alpha-D-glucose 6-phosphate = beta-D-fructose 6-phosphate. Its pathway is carbohydrate biosynthesis; gluconeogenesis. It participates in carbohydrate degradation; glycolysis; D-glyceraldehyde 3-phosphate and glycerone phosphate from D-glucose: step 2/4. In terms of biological role, catalyzes the reversible isomerization of glucose-6-phosphate to fructose-6-phosphate. The sequence is that of Glucose-6-phosphate isomerase from Vibrio vulnificus (strain YJ016).